The chain runs to 480 residues: Cytochrome b-c1 complex subunit 1, mitochondrial (480 aa).

The N-terminal 34 residues, 1-34 (MAASAVCRAAGAGTRVLLRTRRSPALLRSSDLRG), are a transit peptide targeting the mitochondrion. N6-acetyllysine occurs at positions 111 and 138. An N6-acetyllysine; alternate modification is found at lysine 163. Lysine 163 is subject to N6-succinyllysine; alternate. At serine 212 the chain carries Phosphoserine. N6-acetyllysine is present on lysine 248.

The protein belongs to the peptidase M16 family. UQCRC1/QCR1 subfamily. As to quaternary structure, component of the ubiquinol-cytochrome c oxidoreductase (cytochrome b-c1 complex, complex III, CIII), a multisubunit enzyme composed of 11 subunits. The complex is composed of 3 respiratory subunits cytochrome b, cytochrome c1 and Rieske protein UQCRFS1, 2 core protein subunits UQCRC1/QCR1 and UQCRC2/QCR2, and 6 low-molecular weight protein subunits UQCRH/QCR6, UQCRB/QCR7, UQCRQ/QCR8, UQCR10/QCR9, UQCR11/QCR10 and subunit 9, the cleavage product of Rieske protein UQCRFS1. The complex exists as an obligatory dimer and forms supercomplexes (SCs) in the inner mitochondrial membrane with NADH-ubiquinone oxidoreductase (complex I, CI) and cytochrome c oxidase (complex IV, CIV), resulting in different assemblies (supercomplex SCI(1)III(2)IV(1) and megacomplex MCI(2)III(2)IV(2)). Interacts with UQCC6. Interacts with STMP1.

Its subcellular location is the mitochondrion inner membrane. Functionally, component of the ubiquinol-cytochrome c oxidoreductase, a multisubunit transmembrane complex that is part of the mitochondrial electron transport chain which drives oxidative phosphorylation. The respiratory chain contains 3 multisubunit complexes succinate dehydrogenase (complex II, CII), ubiquinol-cytochrome c oxidoreductase (cytochrome b-c1 complex, complex III, CIII) and cytochrome c oxidase (complex IV, CIV), that cooperate to transfer electrons derived from NADH and succinate to molecular oxygen, creating an electrochemical gradient over the inner membrane that drives transmembrane transport and the ATP synthase. The cytochrome b-c1 complex catalyzes electron transfer from ubiquinol to cytochrome c, linking this redox reaction to translocation of protons across the mitochondrial inner membrane, with protons being carried across the membrane as hydrogens on the quinol. In the process called Q cycle, 2 protons are consumed from the matrix, 4 protons are released into the intermembrane space and 2 electrons are passed to cytochrome c. The 2 core subunits UQCRC1/QCR1 and UQCRC2/QCR2 are homologous to the 2 mitochondrial-processing peptidase (MPP) subunits beta-MPP and alpha-MPP respectively, and they seem to have preserved their MPP processing properties. May be involved in the in situ processing of UQCRFS1 into the mature Rieske protein and its mitochondrial targeting sequence (MTS)/subunit 9 when incorporated into complex III. Seems to play an important role in the maintenance of proper mitochondrial function in nigral dopaminergic neurons. The protein is Cytochrome b-c1 complex subunit 1, mitochondrial (UQCRC1) of Bos taurus (Bovine).